We begin with the raw amino-acid sequence, 357 residues long: Probable cinnamyl alcohol dehydrogenase 2 (357 aa).

Cysteine 47 contributes to the Zn(2+) binding site. Serine 49 contributes to the NADP(+) binding site. 7 residues coordinate Zn(2+): histidine 69, glutamate 70, cysteine 100, cysteine 103, cysteine 106, cysteine 114, and cysteine 163. NADP(+) contacts are provided by residues threonine 167, 188–193 (GLGGVG), 211–216 (SSSNKK), threonine 251, glycine 275, and 298–300 (SFI).

Belongs to the zinc-containing alcohol dehydrogenase family. Homodimer. Zn(2+) serves as cofactor. Post-translationally, the N-terminus is blocked.

The catalysed reaction is (E)-cinnamyl alcohol + NADP(+) = (E)-cinnamaldehyde + NADPH + H(+). It carries out the reaction (E)-coniferol + NADP(+) = (E)-coniferaldehyde + NADPH + H(+). The enzyme catalyses (E)-sinapyl alcohol + NADP(+) = (E)-sinapaldehyde + NADPH + H(+). It catalyses the reaction (E)-4-coumaroyl alcohol + NADP(+) = (E)-4-coumaraldehyde + NADPH + H(+). The catalysed reaction is (E)-caffeyl alcohol + NADP(+) = (E)-caffeyl aldehyde + NADPH + H(+). It functions in the pathway aromatic compound metabolism; phenylpropanoid biosynthesis. Functionally, involved in lignin biosynthesis. Catalyzes the final step specific for the production of lignin monomers. Catalyzes the NADPH-dependent reduction of coniferaldehyde, 5-hydroxyconiferaldehyde, sinapaldehyde, 4-coumaraldehyde and caffeyl aldehyde to their respective alcohols. In Nicotiana tabacum (Common tobacco), this protein is Probable cinnamyl alcohol dehydrogenase 2 (CAD19).